The chain runs to 366 residues: Peroxisomal (S)-2-hydroxy-acid oxidase GLO4 (366 aa).

One can recognise an FMN hydroxy acid dehydrogenase domain in the interval methionine 1–aspartate 360. Tyrosine 27 is an a 2-oxocarboxylate binding site. FMN is bound by residues proline 80–glycine 82, serine 109, glutamine 130–tyrosine 132, and threonine 158. An a 2-oxocarboxylate-binding site is contributed by tyrosine 132. Arginine 167 lines the a 2-oxocarboxylate pocket. FMN is bound by residues lysine 231 and serine 253. Histidine 255 (proton acceptor) is an active-site residue. Residue arginine 258 coordinates a 2-oxocarboxylate. FMN-binding positions include aspartate 286–arginine 290 and residue 309–residue 310. The Microbody targeting signal signature appears at serine 364–leucine 366.

It belongs to the FMN-dependent alpha-hydroxy acid dehydrogenase family. In terms of assembly, homotetramer. The cofactor is FMN.

It localises to the peroxisome. The enzyme catalyses a (2S)-2-hydroxycarboxylate + O2 = a 2-oxocarboxylate + H2O2. It participates in lipid metabolism; fatty acid metabolism. In terms of biological role, oxidase that catalyzes the oxidation of a broad range of 2-hydroxyacids to the corresponding 2-oxoacids, with a reduction of O2 to H2O2. May be involved in a general medium- and long-chain fatty acid catabolic pathway such as alpha-oxidation. This Oryza sativa subsp. indica (Rice) protein is Peroxisomal (S)-2-hydroxy-acid oxidase GLO4 (GLO4).